Here is a 79-residue protein sequence, read N- to C-terminus: Large ribosomal subunit protein eL38 (79 aa).

Belongs to the eukaryotic ribosomal protein eL38 family.

The protein is Large ribosomal subunit protein eL38 (RPL38) of Theileria parva (East coast fever infection agent).